The chain runs to 66 residues: Large ribosomal subunit protein bL33c (66 aa).

The protein belongs to the bacterial ribosomal protein bL33 family.

Its subcellular location is the plastid. The protein localises to the chloroplast. The sequence is that of Large ribosomal subunit protein bL33c from Nandina domestica (Heavenly bamboo).